The sequence spans 234 residues: Probable transcriptional regulatory protein Pfl01_3677 (234 aa).

Belongs to the TACO1 family.

The protein localises to the cytoplasm. This chain is Probable transcriptional regulatory protein Pfl01_3677, found in Pseudomonas fluorescens (strain Pf0-1).